We begin with the raw amino-acid sequence, 447 residues long: Na(+)-translocating NADH-quinone reductase subunit A (447 aa).

It belongs to the NqrA family. As to quaternary structure, composed of six subunits; NqrA, NqrB, NqrC, NqrD, NqrE and NqrF.

The catalysed reaction is a ubiquinone + n Na(+)(in) + NADH + H(+) = a ubiquinol + n Na(+)(out) + NAD(+). NQR complex catalyzes the reduction of ubiquinone-1 to ubiquinol by two successive reactions, coupled with the transport of Na(+) ions from the cytoplasm to the periplasm. NqrA to NqrE are probably involved in the second step, the conversion of ubisemiquinone to ubiquinol. The protein is Na(+)-translocating NADH-quinone reductase subunit A of Saccharophagus degradans (strain 2-40 / ATCC 43961 / DSM 17024).